A 299-amino-acid chain; its full sequence is HTH-type transcriptional regulator CysL (299 aa).

In terms of domain architecture, HTH lysR-type spans 1–58 (MYYDVLKTFIAVVEEKNFTKAAEKLMISQPSVSLHIKNLEKEFQTALLNRSPKHFTTT). The H-T-H motif DNA-binding region spans 18 to 37 (FTKAAEKLMISQPSVSLHIK).

The protein belongs to the LysR transcriptional regulatory family.

Its function is as follows. Transcriptional activator of the cysJI operon which is involved in sulfur assimilation. Also negatively regulates its own transcription. This is HTH-type transcriptional regulator CysL (cysL) from Bacillus subtilis (strain 168).